The primary structure comprises 294 residues: Lysozyme M1 (294 aa).

In terms of domain architecture, Ch-type lysozyme spans G81–A294. Active-site residues include D86, D175, and E177. C185 and C224 form a disulfide bridge.

It belongs to the glycosyl hydrolase 25 family.

The protein resides in the secreted. The catalysed reaction is Hydrolysis of (1-&gt;4)-beta-linkages between N-acetylmuramic acid and N-acetyl-D-glucosamine residues in a peptidoglycan and between N-acetyl-D-glucosamine residues in chitodextrins.. This enzyme has both lysozyme (acetylmuramidase) and diacetylmuramidase activities. The polypeptide is Lysozyme M1 (acm) (Streptomyces globisporus).